The primary structure comprises 350 residues: Heat-inducible transcription repressor HrcA (350 aa).

Belongs to the HrcA family.

In terms of biological role, negative regulator of class I heat shock genes (grpE-dnaK-dnaJ and groELS operons). Prevents heat-shock induction of these operons. The sequence is that of Heat-inducible transcription repressor HrcA from Xanthomonas euvesicatoria pv. vesicatoria (strain 85-10) (Xanthomonas campestris pv. vesicatoria).